The chain runs to 91 residues: Sec-independent protein translocase protein TatA (91 aa).

The chain crosses the membrane as a helical span at residues 1-21 (MGIFDWKHWIVILIVVVLVFG). The segment at 42–91 (AMHDDDKPAEQPAPQPQQAQPAPQGSPLNQPHTIDAQAHKVDEPIRKDQV) is disordered. Positions 51-64 (EQPAPQPQQAQPAP) are enriched in low complexity. The segment covering 78-91 (QAHKVDEPIRKDQV) has biased composition (basic and acidic residues).

This sequence belongs to the TatA/E family. As to quaternary structure, the Tat system comprises two distinct complexes: a TatABC complex, containing multiple copies of TatA, TatB and TatC subunits, and a separate TatA complex, containing only TatA subunits. Substrates initially bind to the TatABC complex, which probably triggers association of the separate TatA complex to form the active translocon.

The protein localises to the cell inner membrane. Its function is as follows. Part of the twin-arginine translocation (Tat) system that transports large folded proteins containing a characteristic twin-arginine motif in their signal peptide across membranes. TatA could form the protein-conducting channel of the Tat system. This is Sec-independent protein translocase protein TatA from Pseudomonas syringae pv. tomato (strain ATCC BAA-871 / DC3000).